The following is a 242-amino-acid chain: MQGKIALVTGSTRGIGRAIAEELSSKGAFVIGTATSEKGAEAISAYLGDKGKGLVLNVTDKESIETLLEQIKNDFGDIDILVNNAGITRDNLLMRMKDEEWFDIMQTNLTSVYHLSKAMLRSMMKKRFGRIINIGSVVGSTGNPGQTNYCAAKAGVVGFSKSLAKEVAARGITVNVVAPGFIATDMTEVLTDEQKAGILSNVPAGRLGEAKDIAKAVAFLASDDAGYITGTTLHVNGGLYLS.

NADP(+) contacts are provided by residues 10–13 (GSTR), threonine 35, 57–58 (NV), and asparagine 84. Serine 136 contacts substrate. The active-site Proton acceptor is the tyrosine 149. Residues 149 to 153 (YCAAK) and isoleucine 182 contribute to the NADP(+) site.

This sequence belongs to the short-chain dehydrogenases/reductases (SDR) family. In terms of assembly, homotetramer.

The enzyme catalyses a (3R)-hydroxyacyl-[ACP] + NADP(+) = a 3-oxoacyl-[ACP] + NADPH + H(+). The protein operates within lipid metabolism; fatty acid biosynthesis. Its function is as follows. Catalyzes the NADPH-dependent reduction of beta-ketoacyl-ACP substrates to beta-hydroxyacyl-ACP products, the first reductive step in the elongation cycle of fatty acid biosynthesis. The polypeptide is 3-oxoacyl-[acyl-carrier-protein] reductase FabG (fabG) (Haemophilus influenzae (strain ATCC 51907 / DSM 11121 / KW20 / Rd)).